The following is a 426-amino-acid chain: Glutamate-1-semialdehyde 2,1-aminomutase (426 aa).

K265 is subject to N6-(pyridoxal phosphate)lysine.

It belongs to the class-III pyridoxal-phosphate-dependent aminotransferase family. HemL subfamily. As to quaternary structure, homodimer. Requires pyridoxal 5'-phosphate as cofactor.

Its subcellular location is the cytoplasm. It carries out the reaction (S)-4-amino-5-oxopentanoate = 5-aminolevulinate. It functions in the pathway porphyrin-containing compound metabolism; protoporphyrin-IX biosynthesis; 5-aminolevulinate from L-glutamyl-tRNA(Glu): step 2/2. The chain is Glutamate-1-semialdehyde 2,1-aminomutase from Alteromonas mediterranea (strain DSM 17117 / CIP 110805 / LMG 28347 / Deep ecotype).